Consider the following 117-residue polypeptide: Putative membrane protein insertion efficiency factor (117 aa).

It belongs to the UPF0161 family.

It is found in the cell inner membrane. In terms of biological role, could be involved in insertion of integral membrane proteins into the membrane. This chain is Putative membrane protein insertion efficiency factor, found in Nitrobacter winogradskyi (strain ATCC 25391 / DSM 10237 / CIP 104748 / NCIMB 11846 / Nb-255).